A 947-amino-acid chain; its full sequence is MNNKKTATNRKGMIPNRLNKFSIRKYSVGTASILVGTTLIFGLSGHEAKAAEHTNGELNQSKNETTAPSENKTTKKVDSRQLKDNTQTATADQPKVTMSDSATVKETSSNMQSPQNATANQSTTKTSNVTTNDKSSTTYSNETDKSNLTQAKDVSTTPKTTTIKPRTLNRMAVNTVAAPQQGTNVNDKVHFSNIDIAIDKGHVNQTTGKTEFWATSSDVLKLKANYTIDDSVKEGDTFTFKYGQYFRPGSVRLPSQTQNLYNAQGNIIAKGIYDSTTNTTTYTFTNYVDQYTNVRGSFEQVAFAKRKNATTDKTAYKMEVTLGNDTYSEEIIVDYGNKKAQPLISSTNYINNEDLSRNMTAYVNQPKNTYTKQTFVTNLTGYKFNPNAKNFKIYEVTDQNQFVDSFTPDTSKLKDVTDQFDVIYSNDNKTATVDLMKGQTSSNKQYIIQQVAYPDNSSTDNGKIDYTLDTDKTKYSWSNSYSNVNGSSTANGDQKKYNLGDYVWEDTNKDGKQDANEKGIKGVYVILKDSNGKELDRTTTDENGKYQFTGLSNGTYSVEFSTPAGYTPTTANVGTDDAVDSDGLTTTGVIKDADNMTLDSGFYKTPKYSLGDYVWYDSNKDGKQDSTEKGIKGVKVTLQNEKGEVIGTTETDENGKYRFDNLDSGKYKVIFEKPAGLTQTGTNTTEDDKDADGGEVDVTITDHDDFTLDNGYYEEETSDSDSDSDSDSDSDSDSDSDSDSDSDSDSDSDSDSDSDSDSDSDSDSDSNSDSDSDSDSDSDSDSDSDSDSDSDSDSDSDSDSDSDSDSDSDSDSDSDSDSDSDSDSDSDSDSDSDSDSDSDSDSDSDSDSDSDSDSDSDSDSDSDSDSDSDSDSDSDNDSDSDSDSDSDAGKHTPAKPMSTVKDQHKTAKALPETGSENNNSNNGTLFGGLFAALGSLLLFGRRKKQNK.

The first 50 residues, 1–50 (MNNKKTATNRKGMIPNRLNKFSIRKYSVGTASILVGTTLIFGLSGHEAKA), serve as a signal peptide directing secretion. The short motif at 21–32 (FSIRKYSVGTAS) is the YSIRK-G/S signaling motif element. Positions 51–164 (AEHTNGELNQ…STTPKTTTIK (114 aa)) are disordered. Residues 51–495 (AEHTNGELNQ…GSSTANGDQK (445 aa)) form a ligand binding A region region. The segment covering 56–71 (GELNQSKNETTAPSEN) has biased composition (polar residues). A compositionally biased stretch (basic and acidic residues) spans 72–83 (KTTKKVDSRQLK). The span at 84-155 (DNTQTATADQ…SNLTQAKDVS (72 aa)) shows a compositional bias: polar residues. 2 consecutive CNA-B domains span residues 496–606 (KYNL…YKTP) and 607–717 (KYSL…EEET). The disordered stretch occupies residues 678–927 (TQTGTNTTED…NNSNNGTLFG (250 aa)). Acidic residues-rich tracts occupy residues 685–695 (TEDDKDADGGE) and 712–886 (YYEE…DSDS). An LPXTG sorting signal motif is present at residues 910–914 (LPETG). The span at 912–927 (ETGSENNNSNNGTLFG) shows a compositional bias: low complexity. Thr-913 bears the Pentaglycyl murein peptidoglycan amidated threonine mark. A propeptide spans 914 to 947 (GSENNNSNNGTLFGGLFAALGSLLLFGRRKKQNK) (removed by sortase).

This sequence belongs to the serine-aspartate repeat-containing protein (SDr) family. In terms of assembly, homodimerizes; via N2-Domain. Interacts with host NRXN1; this interaction mediates bacterial attachment to host cells.

The protein resides in the secreted. The protein localises to the cell wall. Functionally, cell surface-associated calcium-binding protein which plays an important role in adhesion and pathogenesis. Mediates interactions with components of the extracellular matrix such as host NRXN1 to promote bacterial adhesion. In Staphylococcus aureus (strain Newman), this protein is Serine-aspartate repeat-containing protein C (sdrC).